The primary structure comprises 715 residues: Palmitoyltransferase ZDHHC5 (715 aa).

The Cytoplasmic portion of the chain corresponds to 1 to 13 (MPAESGKRFKPSK). A helical transmembrane segment spans residues 14–34 (YVPVSAAAIFLVGATTLFFAF). At 35–52 (TCPGLSLNVSPAVPIYNA) the chain is on the extracellular side. The helical transmembrane segment at 53 to 73 (IMFLFVLANFSMATFMDPGIF) threads the bilayer. At 74-148 (PRAEEDEDKE…NCIGRRNYRY (75 aa)) the chain is on the cytoplasmic side. Tyr-91 bears the Phosphotyrosine mark. A DHHC domain is found at 104–154 (KWCATCRFYRPPRCSHCSVCDNCVEEFDHHCPWVNNCIGRRNYRYFFLFLL). Cys-134 serves as the catalytic S-palmitoyl cysteine intermediate. The chain crosses the membrane as a helical span at residues 149 to 169 (FFLFLLSLTAHIMGVFGFGLL). At 170–191 (YVLYHIEELSGVRTAVTMAVMC) the chain is on the extracellular side. The chain crosses the membrane as a helical span at residues 192–212 (VAGLFFIPVAGLTGFHVVLVA). Over 213–715 (RGRTTNEQVT…VGGTTYEISV (503 aa)) the chain is Cytoplasmic. Ser-247 is modified (phosphoserine). Residues 289-715 (GELRRTKSKG…VGGTTYEISV (427 aa)) are disordered. A Phosphothreonine modification is found at Thr-294. Phosphoserine is present on residues Ser-296 and Ser-299. Phosphothreonine is present on Thr-303. At Ser-345 the chain carries Phosphoserine. Thr-348 and Thr-350 each carry phosphothreonine. A compositionally biased stretch (low complexity) spans 359-373 (SSSSTSAAMPHSSSA). Phosphoserine occurs at positions 380, 398, 406, and 409. Phosphothreonine is present on Thr-411. Phosphoserine occurs at positions 415, 425, 429, and 432. Low complexity predominate over residues 422–432 (SSGSRSSSLKS). At Thr-436 the chain carries Phosphothreonine. The segment covering 442–478 (QLQSIRSEGTTSTSYKSLANQTRNGSLSYDSLLTPSD) has biased composition (polar residues). Ser-529 and Ser-554 each carry phosphoserine. Over residues 581-597 (PRTSSSSDDSKRSPLSK) the composition is skewed to low complexity. Arg-617 carries the omega-N-methylarginine modification. The residue at position 621 (Ser-621) is a Phosphoserine. Position 659 is a phosphothreonine (Thr-659). Residues 666-677 (LKTTYSKSNGQP) show a composition bias toward polar residues. 2 positions are modified to phosphoserine: Ser-684 and Ser-694. Arg-697 is subject to Omega-N-methylarginine.

This sequence belongs to the DHHC palmitoyltransferase family. ERF2/ZDHHC9 subfamily. In terms of processing, phosphorylation regulates association with endocytic proteins and its subcellular localization. Phosphorylation by LYN during fatty acid uptake leads to inactivation of the activity. Post-translationally, autopalmitoylated. Palmitoylation of the C-terminal tail regulates stimulation-dependent plasma membrane motility. In terms of tissue distribution, highly enriched in brain, detectable in liver and heart, and undetectable in most other tissues.

The protein localises to the cell membrane. It carries out the reaction L-cysteinyl-[protein] + hexadecanoyl-CoA = S-hexadecanoyl-L-cysteinyl-[protein] + CoA. Its function is as follows. Palmitoyltransferase that catalyzes the addition of palmitate onto various protein substrates such as CTNND2, CD36, GSDMD, NLRP3, NOD1, NOD2, STAT3 and S1PR1 thus plays a role in various biological processes including cell adhesion, inflammation, fatty acid uptake, bacterial sensing or cardiac functions. Plays an important role in the regulation of synapse efficacy by mediating palmitoylation of delta-catenin/CTNND2, thereby increasing synaptic delivery and surface stabilization of alpha-amino-3-hydroxy-5-methyl-4-isoxazole propionic acid receptors (AMPARs). Under basal conditions, remains at the synaptic membrane through FYN-mediated phosphorylation that prevents association with endocytic proteins. Neuronal activity enhances the internalization and trafficking of DHHC5 from spines to dendritic shafts where it palmitoylates delta-catenin/CTNND2. Regulates cell adhesion at the plasma membrane by palmitoylating GOLGA7B and DSG2. Plays a role in innate immune response by mediating the palmitoylation of NOD1 and NOD2 and their proper recruitment to the bacterial entry site and phagosomes. Also participates in fatty acid uptake by palmitoylating CD36 and thereby targeting it to the plasma membrane. Upon binding of fatty acids to CD36, gets phosphorylated by LYN leading to inactivation and subsequent CD36 caveolar endocytosis. Controls oligodendrocyte development by catalyzing STAT3 palmitoylation. Acts as a regulator of inflammatory response by mediating palmitoylation of NLRP3 and GSDMD. Palmitoylates NLRP3 to promote inflammasome assembly and activation. Activates pyroptosis by catalyzing palmitoylation of gasdermin-D (GSDMD), thereby promoting membrane translocation and pore formation of GSDMD. This is Palmitoyltransferase ZDHHC5 (Zdhhc5) from Mus musculus (Mouse).